A 252-amino-acid chain; its full sequence is MIEKDFVKEGLKRTRIDEYLETKLERAGYGGMDIQVTPVGTMVIVYAEKPGMVIGRGGKTVRAITKTLKNNFDLENPQVEVKEVDVPELNPRIMAHKVVAMLQRGMQFRRVAYSIIRRIMSAGAQGVEVTISGKIRGSRSACAKFNEGYIKKCGEPSIKYVKEGFATVQLKPGVLGIYVRIMPPEVTLPDNIEISEPEIVDVEEPVAQEVPEVQESEIVEEITGEDILEELSEESEIEEITEEIEDVETLEE.

The KH type-2 domain occupies 16-85 (IDEYLETKLE…NPQVEVKEVD (70 aa)). The tract at residues 233 to 252 (EESEIEEITEEIEDVETLEE) is disordered.

Belongs to the universal ribosomal protein uS3 family. As to quaternary structure, part of the 30S ribosomal subunit.

Functionally, binds the lower part of the 30S subunit head. This chain is Small ribosomal subunit protein uS3, found in Methanosphaera stadtmanae (strain ATCC 43021 / DSM 3091 / JCM 11832 / MCB-3).